We begin with the raw amino-acid sequence, 710 residues long: Solute carrier family 15 member 1 (710 aa).

Residues 1-21 (MGMSKSRGCFGYPLSIFFIVV) form a helical membrane-spanning segment. Residues 22–53 (NEFCERFSYYGMRALLVLYFRNFLGWDDDLST) lie on the Extracellular side of the membrane. A helical membrane pass occupies residues 54 to 74 (AIYHTFVALCYLTPILGALIA). Residues 75 to 82 (DSWLGKFK) lie on the Cytoplasmic side of the membrane. A helical membrane pass occupies residues 83-103 (TIVSLSIVYTIGQAVISVSSI). Topologically, residues 104-118 (NDLTDHDHDGSPNNL) are extracellular. A helical transmembrane segment spans residues 119–139 (PLHVALSMIGLALIALGTGGI). The Cytoplasmic portion of the chain corresponds to 140–161 (KPCVSAFGGDQFEEGQEKQRNR). A helical transmembrane segment spans residues 162–182 (FFSIFYLAINAGSLLSTIITP). Residues 183–198 (ILRVQQCGIHSQQACY) are Extracellular-facing. A helical transmembrane segment spans residues 199 to 219 (PLAFGVPAALMAVALIVFVLG). Residues 220–276 (SGMYKKFQPQGNIMGKVAKCIRFAIKNRFRHRSKAFPKRNHWLDWAKEKYDERLISQ) lie on the Cytoplasmic side of the membrane. Residues 277–297 (IKIMTKVMFLYIPLPMFWALF) form a helical membrane-spanning segment. Residues 298–327 (DQQGSRWTLQATTMTGKIGTIEIQPDQMQT) are Extracellular-facing. The helical transmembrane segment at 328–348 (VNAILIVIMVPIVDAVVYPLI) threads the bilayer. Over 349–361 (AKCGFNFTSLKKM) the chain is Cytoplasmic. A helical membrane pass occupies residues 362-382 (TVGMFLASMAFVVAAIVQVEI). Residues 383–586 (DKTLPVFPSG…PPNTVNMALQ (204 aa)) lie on the Extracellular side of the membrane. The segment at 383–586 (DKTLPVFPSG…PPNTVNMALQ (204 aa)) is extracellular domain (ECD). Residues Asn-415, Asn-439, Asn-510, Asn-532, and Asn-539 are each glycosylated (N-linked (GlcNAc...) asparagine). The chain crosses the membrane as a helical span at residues 587–607 (IPQYFLLTCGEVVFSVTGLEF). The Cytoplasmic segment spans residues 608-621 (SYSQAPSNMKSVLQ). Residues 622-642 (AGWLLTVAIGNIIVLIVAEAG) traverse the membrane as a helical segment. The Extracellular portion of the chain corresponds to 643 to 647 (HFDKQ). Residues 648–668 (WAEYVLFASLLLVVCIIFAIM) form a helical membrane-spanning segment. Residues 669 to 710 (ARFYTYINPAEIEAQFDEDEKKKGVGKENPYSSLEPVSQTNM) lie on the Cytoplasmic side of the membrane. The interval 687–710 (DEKKKGVGKENPYSSLEPVSQTNM) is disordered. The span at 698–710 (PYSSLEPVSQTNM) shows a compositional bias: polar residues.

This sequence belongs to the major facilitator superfamily. Proton-dependent oligopeptide transporter (POT/PTR) (TC 2.A.17) family. As to quaternary structure, interacts (via extracellular domain region) with trypsin. In terms of tissue distribution, highly expressed in small intestine. As to expression, expression is restricted to pinealocytes.

Its subcellular location is the apical cell membrane. The catalysed reaction is a dipeptide(out) + H(+)(out) = a dipeptide(in) + H(+)(in). It carries out the reaction an L-amino acid tripeptide(out) + H(+)(out) = an L-amino acid tripeptide(in) + H(+)(in). The enzyme catalyses L-alanyl-L-lysine(out) + H(+)(out) = L-alanyl-L-lysine(in) + H(+)(in). It catalyses the reaction L-alanyl-L-proline(out) + H(+)(out) = L-alanyl-L-proline(in) + H(+)(in). The catalysed reaction is L-alanyl-L-valine(out) + H(+)(out) = L-alanyl-L-valine(in) + H(+)(in). It carries out the reaction carnosine(out) + H(+)(out) = carnosine(in) + H(+)(in). The enzyme catalyses glycyl-L-glutamine(out) + H(+)(out) = glycyl-L-glutamine(in) + H(+)(in). It catalyses the reaction glycyl-L-leucine(out) + H(+)(out) = glycyl-L-leucine(in) + H(+)(in). The catalysed reaction is glycyl-L-proline(out) + H(+)(out) = glycyl-L-proline(in) + H(+)(in). It carries out the reaction glycyl-sarcosine(out) + H(+)(out) = glycyl-sarcosine(in) + H(+)(in). The enzyme catalyses L-leucyl-L-leucine(out) + H(+)(out) = L-leucyl-L-leucine(in) + H(+)(in). It catalyses the reaction L-leucyl-L-proline(out) + H(+)(out) = L-leucyl-L-proline(in) + H(+)(in). The catalysed reaction is L-phenylalanyl-L-leucine(out) + H(+)(out) = L-phenylalanyl-L-leucine(in) + H(+)(in). It carries out the reaction L-phenylalanyl-L-phenylalanine(out) + H(+)(out) = L-phenylalanyl-L-phenylalanine(in) + H(+)(in). The enzyme catalyses L-lysyl-glycine(out) + H(+)(out) = L-lysyl-glycine(in) + H(+)(in). It catalyses the reaction L-tyrosylglycine(out) + H(+)(out) = L-tyrosylglycine(in) + H(+)(in). The catalysed reaction is L-alanyl-L-aspartate(out) + 2 H(+)(out) = L-alanyl-L-aspartate(in) + 2 H(+)(in). It carries out the reaction L-aspartyl-glycine(out) + 2 H(+)(out) = L-aspartyl-glycine(in) + 2 H(+)(in). The enzyme catalyses glycyl-L-aspartate(out) + 2 H(+)(out) = glycyl-L-aspartate(in) + 2 H(+)(in). It catalyses the reaction glycyl-L-glutamate(out) + 2 H(+)(out) = glycyl-L-glutamate(in) + 2 H(+)(in). The catalysed reaction is L-alanyl-L-leucyl-L-alanine(out) + H(+)(out) = L-alanyl-L-leucyl-L-alanine(in) + H(+)(in). It carries out the reaction L-alanyl-L-prolylglycine(out) + H(+)(out) = L-alanyl-L-prolylglycine(in) + H(+)(in). The enzyme catalyses glycylglycyl-L-isoleucine(out) + H(+)(out) = glycylglycyl-L-isoleucine(in) + H(+)(in). It catalyses the reaction glycylglycyl-L-proline(out) + H(+)(out) = glycylglycyl-L-proline(in) + H(+)(in). The catalysed reaction is L-methionyl-L-phenylalanyl-L-methionine(out) + H(+)(out) = L-methionyl-L-phenylalanyl-L-methionine(in) + H(+)(in). It carries out the reaction N-acetyl-D-muramoyl-L-alanyl-D-isoglutamine(out) + 2 H(+)(out) = N-acetyl-D-muramoyl-L-alanyl-D-isoglutamine(in) + 2 H(+)(in). The enzyme catalyses N(alpha)-formyl-L-methionyl-L-leucyl-L-phenylalanine(out) + 2 H(+)(out) = N(alpha)-formyl-L-methionyl-L-leucyl-L-phenylalanine(in) + 2 H(+)(in). Functionally, electrogenic proton-coupled amino-acid transporter that transports oligopeptides of 2 to 4 amino acids with a preference for dipeptides. Transports neutral and monovalently charged peptides with a proton to peptide stoichiometry of 1:1 or 2:1. Primarily responsible for the absorption of dietary di- and tripeptides from the small intestinal lumen. Mediates transepithelial transport of muramyl and N-formylated bacterial dipeptides contributing to recognition of pathogenic bacteria by the mucosal immune system. This chain is Solute carrier family 15 member 1 (Slc15a1), found in Rattus norvegicus (Rat).